We begin with the raw amino-acid sequence, 265 residues long: Eukaryotic translation initiation factor 3 subunit J (265 aa).

Acidic residues-rich tracts occupy residues 1–12 and 26–44; these read MAPERWDDEEDS and DEEE…DSEV. 2 disordered regions span residues 1–113 and 212–265; these read MAPE…DADL and TMSN…DDFM. Composition is skewed to basic and acidic residues over residues 45-65 and 73-86; these read EREK…EAAA and RIQE…KKAE. A coiled-coil region spans residues 61–95; it reads AEAAAKKKSKSQRIQEHKEERKKKAEEEDSDSEEE. Residues 87–97 are compositionally biased toward acidic residues; it reads EEDSDSEEEDD. Basic and acidic residues predominate over residues 216 to 228; it reads EKMREERAADKGS. Positions 251–265 are enriched in acidic residues; the sequence is DYDNGDDGLGDDDFM.

This sequence belongs to the eIF-3 subunit J family. In terms of assembly, component of the eukaryotic translation initiation factor 3 (eIF-3) complex.

It is found in the cytoplasm. Functionally, component of the eukaryotic translation initiation factor 3 (eIF-3) complex, which is involved in protein synthesis of a specialized repertoire of mRNAs and, together with other initiation factors, stimulates binding of mRNA and methionyl-tRNAi to the 40S ribosome. The eIF-3 complex specifically targets and initiates translation of a subset of mRNAs involved in cell proliferation. This is Eukaryotic translation initiation factor 3 subunit J (hcr1) from Aspergillus oryzae (strain ATCC 42149 / RIB 40) (Yellow koji mold).